A 207-amino-acid polypeptide reads, in one-letter code: Large ribosomal subunit protein uL4 (207 aa).

The disordered stretch occupies residues 48–75; that stretch reads THSVKNRSAVRGGGRKPWRQKGTGRARQ. A compositionally biased stretch (basic residues) spans 60–71; the sequence is GGRKPWRQKGTG.

It belongs to the universal ribosomal protein uL4 family. Part of the 50S ribosomal subunit.

Functionally, one of the primary rRNA binding proteins, this protein initially binds near the 5'-end of the 23S rRNA. It is important during the early stages of 50S assembly. It makes multiple contacts with different domains of the 23S rRNA in the assembled 50S subunit and ribosome. Forms part of the polypeptide exit tunnel. This chain is Large ribosomal subunit protein uL4, found in Staphylococcus carnosus (strain TM300).